A 349-amino-acid polypeptide reads, in one-letter code: Flap endonuclease 1 (349 aa).

Residues 1–98 form an N-domain region; the sequence is MDLADLVKDV…EELERRRKAK (98 aa). Residues D27, D80, E152, E154, D173, D175, and D236 each coordinate Mg(2+). Residues 116 to 258 form an I-domain region; it reads ELRKYSQAIL…RALKIIKKYG (143 aa). The tract at residues 341–349 is interaction with PCNA; that stretch reads RQTGLDRWF.

It belongs to the XPG/RAD2 endonuclease family. FEN1 subfamily. In terms of assembly, interacts with PCNA via subunit PCNA1. It depends on Mg(2+) as a cofactor.

With respect to regulation, heterotrimeric PCNA stimulates the nuclease activity without altering cleavage specificity. Structure-specific nuclease with 5'-flap endonuclease and 5'-3' exonuclease activities involved in DNA replication and repair. During DNA replication, cleaves the 5'-overhanging flap structure that is generated by displacement synthesis when DNA polymerase encounters the 5'-end of a downstream Okazaki fragment. Binds the unpaired 3'-DNA end and kinks the DNA to facilitate 5' cleavage specificity. Cleaves one nucleotide into the double-stranded DNA from the junction in flap DNA, leaving a nick for ligation. Also involved in the base excision repair (BER) pathway. Acts as a genome stabilization factor that prevents flaps from equilibrating into structures that lead to duplications and deletions. Also possesses 5'-3' exonuclease activity on nicked or gapped double-stranded DNA. DNA polymerase I, DNA ligase and the flap endonuclease may be constitutively associated with the PCNA heterotrimer forming a scanning complex able to couple DNA synthesis and Okazaki fragment maturation. In Saccharolobus solfataricus (strain ATCC 35092 / DSM 1617 / JCM 11322 / P2) (Sulfolobus solfataricus), this protein is Flap endonuclease 1.